A 508-amino-acid chain; its full sequence is Light-independent protochlorophyllide reductase subunit B (508 aa).

Asp36 is a binding site for [4Fe-4S] cluster. Asp294 functions as the Proton donor in the catalytic mechanism. Position 429–430 (429–430 (GM)) interacts with substrate.

The protein belongs to the ChlB/BchB/BchZ family. Protochlorophyllide reductase is composed of three subunits; ChlL, ChlN and ChlB. Forms a heterotetramer of two ChlB and two ChlN subunits. [4Fe-4S] cluster serves as cofactor.

The enzyme catalyses chlorophyllide a + oxidized 2[4Fe-4S]-[ferredoxin] + 2 ADP + 2 phosphate = protochlorophyllide a + reduced 2[4Fe-4S]-[ferredoxin] + 2 ATP + 2 H2O. The protein operates within porphyrin-containing compound metabolism; chlorophyll biosynthesis (light-independent). Functionally, component of the dark-operative protochlorophyllide reductase (DPOR) that uses Mg-ATP and reduced ferredoxin to reduce ring D of protochlorophyllide (Pchlide) to form chlorophyllide a (Chlide). This reaction is light-independent. The NB-protein (ChlN-ChlB) is the catalytic component of the complex. In Synechococcus elongatus (strain ATCC 33912 / PCC 7942 / FACHB-805) (Anacystis nidulans R2), this protein is Light-independent protochlorophyllide reductase subunit B.